Consider the following 2334-residue polypeptide: Genome polyprotein (2334 aa).

The region spanning 487–647 is the SF3 helicase domain; sequence QKVVADIHTL…EGWQSTRHGS (161 aa). Tyrosine 1007 is modified (O-(5'-phospho-RNA)-tyrosine). The Peptidase C24 domain occupies 1102–1237; the sequence is GLPGYLRFNG…SKMCTLIDCT (136 aa). Catalysis depends on for 3CLpro activity residues histidine 1128, aspartate 1145, and cysteine 1205. One can recognise a RdRp catalytic domain in the interval 1488-1612; sequence GDFLCLDYSK…AMTPMMVSLL (125 aa). Cysteine 1577 and cysteine 1584 are disulfide-bonded. The segment at 1760 to 1784 is disordered; it reads EGKPRADAPGTATTASVPGTTTDGM. Residues 1767–1781 show a composition bias toward low complexity; the sequence is APGTATTASVPGTTT.

Mn(2+) is required as a cofactor. Specific enzymatic cleavages by its own cysteine protease yield mature proteins. The protease cleaves itself from the nascent polyprotein autocatalytically. Precursor p41 can be cleaved by viral 3CLpro into protein p19 and VPg, or cleaved by host protease into protein p23/2 and protein p18. Post-translationally, VPg is uridylylated by the polymerase and is covalently attached to the 5'-end of the polyadenylated genomic and subgenomic RNAs. This uridylylated form acts as a nucleotide-peptide primer for the polymerase.

It is found in the virion. It localises to the host cytoplasm. It carries out the reaction a ribonucleoside 5'-triphosphate + H2O = a ribonucleoside 5'-diphosphate + phosphate + H(+). The enzyme catalyses Endopeptidase with a preference for cleavage when the P1 position is occupied by Glu-|-Xaa and the P1' position is occupied by Gly-|-Yaa.. It catalyses the reaction RNA(n) + a ribonucleoside 5'-triphosphate = RNA(n+1) + diphosphate. Its function is as follows. Together with NTPase and NS4, initiates the formation of the replication complex. Induces the proliferation of the host smooth ER membranes forming long tubular structures. These remodeled membranes probably form the viral factories that contain the replication complex. Functionally, displays NTPase activity, but no helicase activity. Induces the formation of convoluted membranes derived from the host ER. These remodeled membranes probably form the viral factories that contain the replication complex. Together with NS2 and NS4, initiates the formation of the replication complex. Probable key protein responsible for the formation of membrane alterations by the virus. Induces the formation of convoluted membranes derived from the host ER. These remodeled membranes probably form the viral factories that contain the replication complex. Together with NS2 and NTPase, initiates the formation of the replication complex. In terms of biological role, viral genome-linked protein is covalently linked to the 5'-end of the positive-strand, negative-strand genomic RNAs and subgenomic RNA. Acts as a genome-linked replication primer. May recruit ribosome to viral RNA thereby promoting viral proteins translation. Interacts with host translation initiation complex to allow the translation of viral proteins. Its function is as follows. Processes the polyprotein. 3CLpro-RdRp is first released by autocleavage, then all other proteins are cleaved. May cleave polyadenylate-binding protein thereby inhibiting cellular translation. Functionally, replicates genomic and antigenomic RNA by recognizing replications specific signals. Also transcribes a subgenomic mRNA by initiating RNA synthesis internally on antigenomic RNA. This sgRNA codes for structural proteins. Catalyzes the covalent attachment VPg with viral RNAs. Capsid protein VP60 self assembles to form an icosahedral capsid with a T=3 symmetry, about 35 nm in diameter, and consisting of 180 capsid proteins. A smaller form of capsid with a diameter of 23 nm might be capsid proteins assembled as icosahedron with T=1 symmetry. The capsid encapsulate VP2 proteins and genomic or subgenomic RNA. Attaches virion to target cells by binding histo-blood group antigens, inducing endocytosis of the viral particle. Acidification of the endosome induces conformational change of capsid protein thereby injecting virus genomic RNA into host cytoplasm. This is Genome polyprotein from Lepus europaeus (European hare).